The chain runs to 258 residues: MLSRRIIPCLDVRDGRVVKGVKFRDHIDMGDIVELAMRYRDQGADELVFYDIGASPEGRSVDYAWVERVARLIDIPFCVAGGIRDVETARAVLHAGADKISINSPALGRPQLISELADAFGVQCVVVGIDSIREEDGQWRVRRYTGDPSKTQALPMRTLDWVAEAQRLGAGEIVLNCMDNDGVRHGYDIAQLRQVRALCRVPLIASGGAGEMQHFADVFDQADADGALAASVFHSGAIPIPELKRFLRAQQIEVRDGQ.

Catalysis depends on residues Asp11 and Asp130.

Belongs to the HisA/HisF family. In terms of assembly, heterodimer of HisH and HisF.

The protein resides in the cytoplasm. It catalyses the reaction 5-[(5-phospho-1-deoxy-D-ribulos-1-ylimino)methylamino]-1-(5-phospho-beta-D-ribosyl)imidazole-4-carboxamide + L-glutamine = D-erythro-1-(imidazol-4-yl)glycerol 3-phosphate + 5-amino-1-(5-phospho-beta-D-ribosyl)imidazole-4-carboxamide + L-glutamate + H(+). The protein operates within amino-acid biosynthesis; L-histidine biosynthesis; L-histidine from 5-phospho-alpha-D-ribose 1-diphosphate: step 5/9. Functionally, IGPS catalyzes the conversion of PRFAR and glutamine to IGP, AICAR and glutamate. The HisF subunit catalyzes the cyclization activity that produces IGP and AICAR from PRFAR using the ammonia provided by the HisH subunit. The protein is Imidazole glycerol phosphate synthase subunit HisF of Xanthomonas campestris pv. campestris (strain 8004).